A 236-amino-acid chain; its full sequence is uncharacterized protein (236 aa).

An N-terminal signal peptide occupies residues 1-29 (MKGGDKMKKLILLMLLLPISLIGCTDEES).

This is an uncharacterized protein from Archaeoglobus fulgidus (strain ATCC 49558 / DSM 4304 / JCM 9628 / NBRC 100126 / VC-16).